A 25-amino-acid chain; its full sequence is Xenoposin precursor fragment BM1 (25 aa).

As to expression, expressed by the skin glands.

It localises to the secreted. Its function is as follows. Antimicrobial peptide. The protein is Xenoposin precursor fragment BM1 of Xenopus boumbaensis (Mawa clawed frog).